The sequence spans 211 residues: Vascular-related unknown protein 1 (211 aa).

Over residues 1–12 (MMDTFSCNSYEQ) the composition is skewed to polar residues. The interval 1 to 40 (MMDTFSCNSYEQNHPHDDDIDIDAHDHDSHGGDHQEESGW) is disordered. Residues 13 to 37 (NHPHDDDIDIDAHDHDSHGGDHQEE) are compositionally biased toward basic and acidic residues.

Expressed in vascular tissues of cotyledons, rosette leaves, sepals, petals, anther filaments. Expressed in roots, inflorescence stems and developing seeds.

It is found in the cytoplasm. It localises to the nucleus. Involved in the regulation of xylem development and growth. May regulate secondary wall formation during vascular development by modulation of brassinosteroid, gibberellin and auxin hormone signaling pathways. The protein is Vascular-related unknown protein 1 of Arabidopsis thaliana (Mouse-ear cress).